Consider the following 157-residue polypeptide: uncharacterized protein (157 aa).

4 helical membrane passes run 3–23 (IFSFFSADFWQANSLCFMFIS), 24–44 (AFLSATVLPGNSEVIFVALAV), 47–67 (LMLGSLFNVDILALILIATAG), and 105–125 (IALLLSWLPVVGDLFCAIAGW).

This sequence to E.coli YqaA.

It localises to the cell membrane. This is an uncharacterized protein from Haemophilus influenzae (strain ATCC 51907 / DSM 11121 / KW20 / Rd).